Here is a 979-residue protein sequence, read N- to C-terminus: Putative transcription initiation factor TFIID 111 kDa subunit (979 aa).

Serine 244 carries the phosphoserine modification.

TFIID is composed of TATA binding protein (TBP) and a number of TBP-associated factors (TAFs).

Its subcellular location is the nucleus. In terms of biological role, TAFs are components of the transcription factor IID (TFIID) complex that are essential for mediating regulation of RNA polymerase transcription. The protein is Putative transcription initiation factor TFIID 111 kDa subunit of Schizosaccharomyces pombe (strain 972 / ATCC 24843) (Fission yeast).